The following is a 100-amino-acid chain: Aspartyl/glutamyl-tRNA(Asn/Gln) amidotransferase subunit C (100 aa).

Belongs to the GatC family. In terms of assembly, heterotrimer of A, B and C subunits.

It catalyses the reaction L-glutamyl-tRNA(Gln) + L-glutamine + ATP + H2O = L-glutaminyl-tRNA(Gln) + L-glutamate + ADP + phosphate + H(+). The enzyme catalyses L-aspartyl-tRNA(Asn) + L-glutamine + ATP + H2O = L-asparaginyl-tRNA(Asn) + L-glutamate + ADP + phosphate + 2 H(+). Allows the formation of correctly charged Asn-tRNA(Asn) or Gln-tRNA(Gln) through the transamidation of misacylated Asp-tRNA(Asn) or Glu-tRNA(Gln) in organisms which lack either or both of asparaginyl-tRNA or glutaminyl-tRNA synthetases. The reaction takes place in the presence of glutamine and ATP through an activated phospho-Asp-tRNA(Asn) or phospho-Glu-tRNA(Gln). The sequence is that of Aspartyl/glutamyl-tRNA(Asn/Gln) amidotransferase subunit C from Streptococcus sanguinis (strain SK36).